Consider the following 172-residue polypeptide: EPIDERMAL PATTERNING FACTOR-like protein 7 (172 aa).

An N-terminal signal peptide occupies residues Met1–Pro27. Cystine bridges form between Cys128-Cys159, Cys132-Cys138, Cys135-Cys161, and Cys147-Cys153.

The protein belongs to the plant cysteine rich small secretory peptide family. Epidermal patterning factor subfamily.

It localises to the secreted. Its function is as follows. Controls stomatal patterning. In Arabidopsis thaliana (Mouse-ear cress), this protein is EPIDERMAL PATTERNING FACTOR-like protein 7.